Reading from the N-terminus, the 355-residue chain is Butyrate kinase 1 (355 aa).

Belongs to the acetokinase family.

It localises to the cytoplasm. The enzyme catalyses butanoate + ATP = butanoyl phosphate + ADP. It functions in the pathway lipid metabolism; butanoate metabolism. Catalyzes the conversion of butyryl-CoA through butyryl phosphate to butyrate. The polypeptide is Butyrate kinase 1 (buk1) (Clostridium acetobutylicum (strain ATCC 824 / DSM 792 / JCM 1419 / IAM 19013 / LMG 5710 / NBRC 13948 / NRRL B-527 / VKM B-1787 / 2291 / W)).